A 2271-amino-acid chain; its full sequence is Serine-rich adhesin for platelets (2271 aa).

Residues 1-89 form the signal peptide; the sequence is MSKRQKAFHD…VNMLHDQQAF (89 aa). Residues 90–230 form a serine-rich repeat region 1, SRR1 region; the sequence is AASDAPLTSE…KTSTTSTSTA (141 aa). The segment covering 100–111 has biased composition (polar residues); it reads LNTQSETVGNQN. Disordered regions lie at residues 100 to 229, 751 to 791, and 806 to 2243; these read LNTQ…STST, NSMS…VVST, and SVSA…GLLG. Residues 112–128 are compositionally biased toward low complexity; the sequence is STTIEASTSTADSTSVT. Residues 129-140 are compositionally biased toward polar residues; sequence KNSSSVQTSNSD. Residues 150 to 229 show a composition bias toward low complexity; it reads VTSTTNSTSN…NKTSTTSTST (80 aa). The tract at residues 231–751 is non-repeat region (NRR); the sequence is PVKLRTFSRL…TTFKYEVTRN (521 aa). Composition is skewed to low complexity over residues 752–791, 806–1392, and 1402–2214; these read SMSDSVSTSGSTQQSQSVSTSKADSQSASTSTSGSIVVST, SVSA…LSLS, and SNSA…ATSE. The tract at residues 752–2232 is serine-rich repeat region 2, SRR2; sequence SMSDSVSTSG…AQSEKRLPDT (1481 aa). Positions 2229–2233 match the LPXTG sorting signal motif; the sequence is LPDTG. Threonine 2232 is modified (pentaglycyl murein peptidoglycan amidated threonine). A propeptide spans 2233–2271 (removed by sortase); it reads GDSIKQNGLLGGVMTLLVGLGLMKRKKKKDENDQDDSQA.

This sequence belongs to the serine-rich repeat protein (SRRP) family. In terms of processing, proteolytically cleaved by a metalloprotease. Glycosylated. It is probable that most of the Ser residues in SSR1 and SSR2 are O-GlcNAcylated. Sequential glycosylation by sugar transferases are able to generate complex sugar polymorphisms.

It localises to the secreted. Its subcellular location is the cell wall. In terms of biological role, mediates binding to human platelets, possibly through a receptor-ligand interaction. Probably associated with virulence in endovascular infection. This is Serine-rich adhesin for platelets (sraP) from Staphylococcus aureus (strain Mu50 / ATCC 700699).